Reading from the N-terminus, the 165-residue chain is uncharacterized protein (165 aa).

The disordered stretch occupies residues 53–123 (CSEKTGSAPN…PAPSSGRQGG (71 aa)). Over residues 58–71 (GSAPNPGSSAPAPA) the composition is skewed to low complexity.

This is an uncharacterized protein from Treponema pallidum (strain Nichols).